A 316-amino-acid polypeptide reads, in one-letter code: MTTKLEQLRKLTTVVADTGDIEAIAKYTPEDATTNPSLILKAAEITEYAPLIDASIEYAKAQSNDKAQQVQDTCDMLAVNIGKEILKVVPGRISTEVDARLSYDTEGSVAKARQLIKMYNDAGITNDRILIKLASTWEGIRAAEILEKEGINCNLTLLFSFAQARACAEAGVYLISPFVGRIMDWYKAKEGRDFEPSEDPGVVSVTGIYNYYKEHGYNTVVMGASFRNIGEILELAGCDRLTISPNLLQELEEATGEVVEKLVDTNGNKARPAAMTHAEFLWDHNQDAMAVEKLAEGIRNFAVDQGKLEAMIATKL.

The Schiff-base intermediate with substrate role is filled by lysine 132.

This sequence belongs to the transaldolase family. Type 1 subfamily. As to quaternary structure, homodimer.

It is found in the cytoplasm. It catalyses the reaction D-sedoheptulose 7-phosphate + D-glyceraldehyde 3-phosphate = D-erythrose 4-phosphate + beta-D-fructose 6-phosphate. Its pathway is carbohydrate degradation; pentose phosphate pathway; D-glyceraldehyde 3-phosphate and beta-D-fructose 6-phosphate from D-ribose 5-phosphate and D-xylulose 5-phosphate (non-oxidative stage): step 2/3. Its function is as follows. Transaldolase is important for the balance of metabolites in the pentose-phosphate pathway. The chain is Transaldolase from Aliivibrio fischeri (strain ATCC 700601 / ES114) (Vibrio fischeri).